A 279-amino-acid polypeptide reads, in one-letter code: 30 kDa ribonucleoprotein, chloroplastic (279 aa).

The 79-residue stretch at 87–165 (LKIFVGNLLF…RALRVNSGPP (79 aa)) folds into the RRM 1 domain. The disordered stretch occupies residues 156–187 (RALRVNSGPPPEKRENSSFRENSSFRGGSRGG). The segment at 166-193 (PEKRENSSFRENSSFRGGSRGGGSFDSS) is linker (Gly-rich). In terms of domain architecture, RRM 2 spans 194 to 272 (NRVYVGNLAW…RAIRVSPAEA (79 aa)).

As to expression, expressed at high levels in the leaves and seedlings, and lower levels are seen in the stems and roots.

It is found in the plastid. The protein resides in the chloroplast. Its function is as follows. Could be involved in splicing and/or processing of chloroplast RNA's. The chain is 30 kDa ribonucleoprotein, chloroplastic from Nicotiana plumbaginifolia (Leadwort-leaved tobacco).